The chain runs to 71 residues: MGKFKMRSKDLRGMSVEELEKTLRELRIKLMGLRYKAKVGLLENPGELREARRNVARILTVLREKREGEKA.

The protein belongs to the universal ribosomal protein uL29 family.

The polypeptide is Large ribosomal subunit protein uL29 (rpl29) (Aeropyrum pernix (strain ATCC 700893 / DSM 11879 / JCM 9820 / NBRC 100138 / K1)).